We begin with the raw amino-acid sequence, 421 residues long: Testin (421 aa).

The PET domain occupies 92–199; it reads MILTNPVAAK…GDVKLPCEMD (108 aa). The tract at residues 133–164 is disordered; sequence EKQPVAGSEGAQYRKKQLAKQLPAHDQDPSKC. Positions 155 to 164 are enriched in basic and acidic residues; that stretch reads PAHDQDPSKC. LIM zinc-binding domains are found at residues 234–297, 299–359, and 362–421; these read YSCY…CDSE, PRCA…NHAV, and QGCH…KMMS.

It belongs to the prickle / espinas / testin family. Interacts via LIM domain 1 with ZYX. Interacts (via LIM domain 3) with ENAH and VASP. Interacts with ALKBH4, talin, actin, alpha-actinin, GRIP1 and PXN. Interacts (via LIM domain 2) with ACTL7A (via N-terminus). Heterodimer with ACTL7A; the heterodimer interacts with ENAH to form a heterotrimer.

The protein resides in the cytoplasm. It is found in the cell junction. It localises to the focal adhesion. Its function is as follows. Scaffold protein that may play a role in cell adhesion, cell spreading and in the reorganization of the actin cytoskeleton. Plays a role in the regulation of cell proliferation. May act as a tumor suppressor. This is Testin (TES) from Microcebus murinus (Gray mouse lemur).